The following is a 162-amino-acid chain: Ribosomal RNA large subunit methyltransferase H (162 aa).

S-adenosyl-L-methionine is bound by residues Leu-78, Gly-109, and 128–133; that span reads LSPLTL.

Belongs to the RNA methyltransferase RlmH family. Homodimer.

It is found in the cytoplasm. It catalyses the reaction pseudouridine(1915) in 23S rRNA + S-adenosyl-L-methionine = N(3)-methylpseudouridine(1915) in 23S rRNA + S-adenosyl-L-homocysteine + H(+). In terms of biological role, specifically methylates the pseudouridine at position 1915 (m3Psi1915) in 23S rRNA. The polypeptide is Ribosomal RNA large subunit methyltransferase H (Psychrobacter sp. (strain PRwf-1)).